We begin with the raw amino-acid sequence, 294 residues long: Glycine--tRNA ligase alpha subunit (294 aa).

The protein belongs to the class-II aminoacyl-tRNA synthetase family. As to quaternary structure, tetramer of two alpha and two beta subunits.

It is found in the cytoplasm. The catalysed reaction is tRNA(Gly) + glycine + ATP = glycyl-tRNA(Gly) + AMP + diphosphate. The polypeptide is Glycine--tRNA ligase alpha subunit (Trichodesmium erythraeum (strain IMS101)).